A 307-amino-acid chain; its full sequence is tRNA pseudouridine synthase B (307 aa).

Asp-45 functions as the Nucleophile in the catalytic mechanism.

Belongs to the pseudouridine synthase TruB family. Type 1 subfamily.

It carries out the reaction uridine(55) in tRNA = pseudouridine(55) in tRNA. Responsible for synthesis of pseudouridine from uracil-55 in the psi GC loop of transfer RNAs. In Heliobacterium mobile (Heliobacillus mobilis), this protein is tRNA pseudouridine synthase B.